The following is a 618-amino-acid chain: Probable Xaa-Pro aminopeptidase P (618 aa).

Residues Asp414, Asp425, Glu523, and Glu537 each coordinate Mn(2+).

This sequence belongs to the peptidase M24B family. Requires Mn(2+) as cofactor.

The enzyme catalyses Release of any N-terminal amino acid, including proline, that is linked to proline, even from a dipeptide or tripeptide.. Functionally, catalyzes the removal of a penultimate prolyl residue from the N-termini of peptides. The sequence is that of Probable Xaa-Pro aminopeptidase P (AMPP) from Metarhizium acridum (strain CQMa 102).